Consider the following 232-residue polypeptide: 7-cyano-7-deazaguanine synthase (232 aa).

Residue 8 to 18 coordinates ATP; the sequence is FSGGQDSTTCL. Zn(2+) is bound by residues Cys187, Cys196, Cys199, and Cys202.

This sequence belongs to the QueC family. Requires Zn(2+) as cofactor.

It catalyses the reaction 7-carboxy-7-deazaguanine + NH4(+) + ATP = 7-cyano-7-deazaguanine + ADP + phosphate + H2O + H(+). It participates in purine metabolism; 7-cyano-7-deazaguanine biosynthesis. Functionally, catalyzes the ATP-dependent conversion of 7-carboxy-7-deazaguanine (CDG) to 7-cyano-7-deazaguanine (preQ(0)). The polypeptide is 7-cyano-7-deazaguanine synthase (Vibrio parahaemolyticus serotype O3:K6 (strain RIMD 2210633)).